The sequence spans 276 residues: 4-deoxy-L-threo-5-hexosulose-uronate ketol-isomerase 1 (276 aa).

Zn(2+)-binding residues include histidine 194, histidine 196, glutamate 201, and histidine 243.

The protein belongs to the KduI family. Zn(2+) serves as cofactor.

The catalysed reaction is 5-dehydro-4-deoxy-D-glucuronate = 3-deoxy-D-glycero-2,5-hexodiulosonate. Its pathway is glycan metabolism; pectin degradation; 2-dehydro-3-deoxy-D-gluconate from pectin: step 4/5. Functionally, catalyzes the isomerization of 5-dehydro-4-deoxy-D-glucuronate to 3-deoxy-D-glycero-2,5-hexodiulosonate. The protein is 4-deoxy-L-threo-5-hexosulose-uronate ketol-isomerase 1 (kduI1) of Enterococcus faecalis (strain ATCC 700802 / V583).